The primary structure comprises 411 residues: ATP-dependent Clp protease ATP-binding subunit ClpX (411 aa).

One can recognise a ClpX-type ZB domain in the interval 1 to 49 (MSDKNIRCSFCGRTQKEVKKLIAGPGVYICDECVKLAYDIIEEEDSEEI). Residues Cys8, Cys11, Cys30, and Cys33 each contribute to the Zn(2+) site. 115-122 (PTGVGKTL) is an ATP binding site.

This sequence belongs to the ClpX chaperone family. As to quaternary structure, component of the ClpX-ClpP complex. Forms a hexameric ring that, in the presence of ATP, binds to fourteen ClpP subunits assembled into a disk-like structure with a central cavity, resembling the structure of eukaryotic proteasomes.

ATP-dependent specificity component of the Clp protease. It directs the protease to specific substrates. Can perform chaperone functions in the absence of ClpP. This Dictyoglomus turgidum (strain DSM 6724 / Z-1310) protein is ATP-dependent Clp protease ATP-binding subunit ClpX.